We begin with the raw amino-acid sequence, 205 residues long: Helix-loop-helix protein 4 (205 aa).

A basic motif region spans residues 3-16 (MVVAKRNARERTRV). One can recognise a bHLH domain in the interval 3-56 (MVVAKRNARERTRVHTVNQAFLVLKQHLPSLRQFTKRVSKLRILNAAITYIDTL). Residues 17–56 (HTVNQAFLVLKQHLPSLRQFTKRVSKLRILNAAITYIDTL) are helix-loop-helix motif.

As to expression, expressed in the ADL sensory neurons.

It is found in the nucleus. Acts as a transcriptional regulator. May mediate transcriptional activation by binding to the E-box motif 5'-CANNTG-3'. Required for the correct morphology, terminal identity and function of the ADL sensory neurons by controlling the expression of the ADL-specific gene repertoire, including chemoreceptor encoding genes, ion channel encoding genes, neuropeptides and the neurotransmitter eat-4. Regulates the expression of the srh-234 chemoreceptor encoding gene in the ADL neurons under feeding conditions. Plays a role in the chemorepulsive response toward ascaroside pheromones mediated by the ADL sensory neurons. The chain is Helix-loop-helix protein 4 (hlh-4) from Caenorhabditis elegans.